We begin with the raw amino-acid sequence, 109 residues long: uncharacterized protein (109 aa).

Residues Met1–Ile25 are disordered. Residues Leu8–Gln22 show a composition bias toward low complexity. Residues Thr42–Leu62 traverse the membrane as a helical segment. The interval Thr84–Met109 is disordered. Residues Pro91–Asn102 show a composition bias toward polar residues.

The protein resides in the host membrane. This is an uncharacterized protein from Bdellovibrio phage phiMH2K (Bacteriophage phiMH2K).